A 309-amino-acid chain; its full sequence is MASQHDKKSVQSGLLHPRNPHRGRYDLDALCRTCPELKMHIQIKPTGDKTIDFSDAKAVLCLNRALLAHYYQVSNWQIPEGYLCPPIPGRADYIHYLADLLAEDLPTSAKGKKIRVLDIGTGANCIYPIIGSQSYGWHFVGTDIDPLAIKIAGMIVQANSCLNGKITLKQQLDKKLIFKGIINEDKFDLTMCNPPFHASLAEAEAGNQRKRKNLGHGKENRAQEKLNFGGQNAELWCPGGEIVFLRQMAEESVAFAKQVRWFSSLLSKGKNVAPLKKLLKQLGCKRIKVVEMAQGQKISRFIAWSFSQE.

Positions 1–21 (MASQHDKKSVQSGLLHPRNPH) are disordered.

It belongs to the methyltransferase superfamily. METTL16/RlmF family.

The protein resides in the cytoplasm. The enzyme catalyses adenosine(1618) in 23S rRNA + S-adenosyl-L-methionine = N(6)-methyladenosine(1618) in 23S rRNA + S-adenosyl-L-homocysteine + H(+). Specifically methylates the adenine in position 1618 of 23S rRNA. This is Ribosomal RNA large subunit methyltransferase F from Desulfotalea psychrophila (strain LSv54 / DSM 12343).